The chain runs to 217 residues: Adr-2-binding protein 1 (217 aa).

The disordered stretch occupies residues 33–65 (ARPEPQHDSLKRRNTTSSIAKKKAKMTRGDEQI). A compositionally biased stretch (basic residues) spans 44-58 (RRNTTSSIAKKKAKM).

In terms of assembly, interacts with double-stranded RNA-specific adenosine deaminase adr-2. As to expression, expressed in main body hypodermal cells, the hypodermal seam cells, pharynx, intestine and some neurons.

Its subcellular location is the nucleus. In terms of biological role, required for the A-I editing activity of the double-stranded RNA-specific adenosine deaminase adr-2 by facilitating adr-2 nuclear localization. The chain is Adr-2-binding protein 1 from Caenorhabditis elegans.